The primary structure comprises 700 residues: MFPPMWRRLIYHPDINYALRQTLVLCLPVAVGLMLGELRFGLLFSLVPACCNIAGLDTPHKRFFKRLIIGASLFATCSLLTQLLLAKDVPLPFLLTGLTLVLGVTAELGPLHAKLLPASLLAAIFTLSLAGYMPVWEPLLIYALGTLWYGLFNWFWFWIWREQPLRESLSLLYRELADYCEAKYSLLTQHTDPEKALPPLLVRQQKAVDLITQCYQQMHMLSAQNNTDYKRMLRIFQEALDLQEHISVSLHQPEEVQKLVERSHAEEVIRWNAQTVAARLRVLADDILYHRLPTRFTMEKQIGALEKIARQHPDNPVGQFCYWHFSRIARVLRTQKPLYARDLLADKQRRMPLLPALKSYLSLKSPALRNAGRLSVMLSVASLMGTALHLPKSYWILMTVLLVTQNGYGATRLRIVNRSVGTVVGLIIAGVALHFKIPEGYTLTLMLITTLASYLILRKNYGWATVGFTITAVYTLQLLWLNGEQYILPRLIDTIIGCLIAFGGTVWLWPQWQSGLLRKNAHDALEAYQEAIRLILSEDPQPTPLAWQRMRVNQAHNTLYNSLNQAMQEPAFNSHYLADMKLWVTHSQFIVEHINAMTTLAREHRALPPELAQEYLQSCEIAIQRCQQRLEYDEPGSSGDANIMDAPEMQPHEGAAGTLEQHLQRVIGHLNTMHTISSMAWRQRPHHGIWLSRKLRDSKA.

Helical transmembrane passes span 24–44, 67–87, 89–109, 115–135, 139–159, 383–403, 420–440, 461–481, and 491–511; these read VLCL…GLLF, LIIG…LLAK, VPLP…AELG, LLPA…YMPV, LLIY…WFWI, LMGT…VLLV, VGTV…IPEG, YGWA…LLWL, and LIDT…LWPQ.

It belongs to the YccS/YhfK family.

The protein localises to the cell membrane. This is an uncharacterized protein from Escherichia coli (strain K12).